The sequence spans 101 residues: Urease subunit beta (101 aa).

It belongs to the urease beta subunit family. As to quaternary structure, heterotrimer of UreA (gamma), UreB (beta) and UreC (alpha) subunits. Three heterotrimers associate to form the active enzyme.

Its subcellular location is the cytoplasm. The enzyme catalyses urea + 2 H2O + H(+) = hydrogencarbonate + 2 NH4(+). The protein operates within nitrogen metabolism; urea degradation; CO(2) and NH(3) from urea (urease route): step 1/1. In Azoarcus sp. (strain BH72), this protein is Urease subunit beta.